A 455-amino-acid polypeptide reads, in one-letter code: Chromosomal replication initiator protein DnaA (455 aa).

Residues 1–75 (MDTNNNIEKE…EILSQNKVGM (75 aa)) form a domain I, interacts with DnaA modulators region. A domain II region spans residues 75-106 (MHLAHSVDVRIEVAPKIQINAQANINYKAIKT). A domain III, AAA+ region region spans residues 107–321 (SVKDSYTFEN…GAIIKISVNA (215 aa)). Residues G151, G153, K154, and T155 each contribute to the ATP site. The segment at 322-455 (NLMNAPIDLN…DKKTAFNSSE (134 aa)) is domain IV, binds dsDNA.

It belongs to the DnaA family. In terms of assembly, oligomerizes as a right-handed, spiral filament on DNA at oriC.

The protein localises to the cytoplasm. In terms of biological role, plays an essential role in the initiation and regulation of chromosomal replication. ATP-DnaA binds to the origin of replication (oriC) to initiate formation of the DNA replication initiation complex once per cell cycle. Binds the DnaA box (a 9 base pair repeat at the origin) and separates the double-stranded (ds)DNA. Forms a right-handed helical filament on oriC DNA; dsDNA binds to the exterior of the filament while single-stranded (ss)DNA is stabiized in the filament's interior. The ATP-DnaA-oriC complex binds and stabilizes one strand of the AT-rich DNA unwinding element (DUE), permitting loading of DNA polymerase. After initiation quickly degrades to an ADP-DnaA complex that is not apt for DNA replication. Binds acidic phospholipids. In Helicobacter pylori (strain P12), this protein is Chromosomal replication initiator protein DnaA.